The chain runs to 233 residues: Riboflavin kinase (233 aa).

Residues 1–99 (MSGATSTGDV…YRRIFEDPGE (99 aa)) are unknown. The riboflavin kinase stretch occupies residues 100–233 (LALAGTVTSG…DDEVTIRVEA (134 aa)). 109-114 (GMGEGR) is a CDP binding site. Residues Thr138 and Asn140 each contribute to the Mg(2+) site. 2 residues coordinate FMN: Thr200 and Glu208. Residue 213-216 (VKLR) participates in CDP binding.

The protein belongs to the archaeal riboflavin kinase family. The cofactor is Mg(2+).

The enzyme catalyses riboflavin + CTP = CDP + FMN + H(+). The protein operates within cofactor biosynthesis; FMN biosynthesis; FMN from riboflavin (CTP route): step 1/1. In terms of biological role, catalyzes the CTP-dependent phosphorylation of riboflavin (vitamin B2) to form flavin mononucleotide (FMN). The sequence is that of Riboflavin kinase (ribK) from Halobacterium salinarum (strain ATCC 700922 / JCM 11081 / NRC-1) (Halobacterium halobium).